The sequence spans 478 residues: Putrescine oxidase (478 aa).

An FAD-binding site is contributed by 15 to 70 (RDVVVVGAGPAGLMAARTLVAAGRTVAVLEARDRVGGRTWSKTVDGAFLEIGGQWI).

It belongs to the flavin monoamine oxidase family. It depends on FAD as a cofactor.

The catalysed reaction is putrescine + O2 + H2O = 4-aminobutanal + H2O2 + NH4(+). The chain is Putrescine oxidase (puo) from Kocuria rosea (Deinococcus erythromyxa).